We begin with the raw amino-acid sequence, 395 residues long: Synaptotagmin-8 (395 aa).

Residues M1–T44 lie on the Extracellular side of the membrane. A helical; Signal-anchor for type III membrane protein membrane pass occupies residues L45–C65. Topologically, residues C66 to S395 are cytoplasmic. C2 domains are found at residues Q113 to Y229 and Q241 to H370.

It belongs to the synaptotagmin family. Homodimer or homooligomer. Homodimerization and homooligomerization do not depend on Ca(2+). Interacts with SYNCRIP isoform 2 C-terminus. Binds inositol 1,3,4,5-tetrakisphosphate (IP4). Binds to AP2 in a Ca(2+)-independent manner. Interacts with STX1A, STX1B and STX2; the interaction is Ca(2+)-dependent. As to expression, ubiquitous. Detected in testis and brain. Expressed in primary neurons, neuroendocrine and endocrine cells.

Its subcellular location is the cytoplasm. The protein resides in the cell membrane. It localises to the cytoplasmic vesicle. It is found in the secretory vesicle. The protein localises to the acrosome. Functionally, involved in the trafficking and exocytosis of secretory vesicles in non-neuronal tissues. Mediates Ca(2+)-regulation of exocytosis acrosomal reaction in sperm. May mediate Ca(2+)-regulation of exocytosis in insulin secreted cells. The chain is Synaptotagmin-8 (Syt8) from Mus musculus (Mouse).